A 113-amino-acid polypeptide reads, in one-letter code: Protein USP2 (113 aa).

An N-terminal signal peptide occupies residues 1-18 (MKITMFFAALSAASGVFA). 6 consecutive repeat copies span residues 32–37 (IGAGVG), 40–45 (IGAGVG), 46–49 (SYGY), 50–53 (PYGA), 59–65 (LQLLPLR), and 69–75 (LRRLPLR). The segment at 32–45 (IGAGVGIGIGAGVG) is 2 X 6 AA repeats. Positions 46–53 (SYGYPYGA) are 2 X 4 AA approximate tandem repeats. The interval 59 to 75 (LQLLPLRWLPLRRLPLR) is 2 X 7 AA approximate repeats.

The protein resides in the secreted. In Puccinia graminis (Black stem rust fungus), this protein is Protein USP2 (USP2).